Consider the following 283-residue polypeptide: MLTLSDIGELRNHLHAARRDAKRIALVPTMGNLHAGHLALVDAARRDADVVVATIFVNPLQFGANEDFASYPRTLEADAQALASHGCDLVFTPRTDALYPHGLEAHTQVSVPDVSEGLCGANRPGHFTGVATVVSLLFNLVQPDAAYFGRKDYQQFMVIRKLVADLHFPIEIVGVPTQRAEDGLALSSRNGYLSAAERQRAPALYRTLCQVHDALRAGEAPPTALRDGLAALAEQGFKPDYLELRRAQDLGPIAPDTQEAILLVAAHLGTTRLIDNLAVSLPR.

An ATP-binding site is contributed by 30–37 (MGNLHAGH). H37 (proton donor) is an active-site residue. A (R)-pantoate-binding site is contributed by Q61. Residue Q61 participates in beta-alanine binding. 149–152 (GRKD) provides a ligand contact to ATP. Q155 is a binding site for (R)-pantoate. ATP is bound at residue 186 to 189 (LSSR).

The protein belongs to the pantothenate synthetase family. As to quaternary structure, homodimer.

The protein resides in the cytoplasm. It catalyses the reaction (R)-pantoate + beta-alanine + ATP = (R)-pantothenate + AMP + diphosphate + H(+). Its pathway is cofactor biosynthesis; (R)-pantothenate biosynthesis; (R)-pantothenate from (R)-pantoate and beta-alanine: step 1/1. Functionally, catalyzes the condensation of pantoate with beta-alanine in an ATP-dependent reaction via a pantoyl-adenylate intermediate. This Chromohalobacter salexigens (strain ATCC BAA-138 / DSM 3043 / CIP 106854 / NCIMB 13768 / 1H11) protein is Pantothenate synthetase.